The chain runs to 254 residues: Receptor expression-enhancing protein 3 (254 aa).

Transmembrane regions (helical) follow at residues 1–21 (MVSW…YPAY), 35–55 (YVRW…ETVA), and 59–79 (LAWF…LLSP). A disordered region spans residues 162–232 (DEPVGHRPYQ…QSMKSVKTIK (71 aa)). A compositionally biased stretch (acidic residues) spans 198–212 (EQTDEEAEGPFSDDE). At Thr-200 the chain carries Phosphothreonine. Position 209 is a phosphoserine (Ser-209).

Belongs to the DP1 family.

It localises to the endoplasmic reticulum membrane. Functionally, microtubule-binding protein required to ensure proper cell division and nuclear envelope reassembly by sequestering the endoplasmic reticulum away from chromosomes during mitosis. Probably acts by clearing the endoplasmic reticulum membrane from metaphase chromosomes. This is Receptor expression-enhancing protein 3 (Reep3) from Mus musculus (Mouse).